The chain runs to 384 residues: N-acetyldiaminopimelate deacetylase (384 aa).

The active site involves Asp-74. The Proton acceptor role is filled by Glu-133.

This sequence belongs to the peptidase M20A family. N-acetyldiaminopimelate deacetylase subfamily.

The enzyme catalyses N-acetyl-(2S,6S)-2,6-diaminopimelate + H2O = (2S,6S)-2,6-diaminopimelate + acetate. The protein operates within amino-acid biosynthesis; L-lysine biosynthesis via DAP pathway; LL-2,6-diaminopimelate from (S)-tetrahydrodipicolinate (acetylase route): step 3/3. Functionally, catalyzes the conversion of N-acetyl-diaminopimelate to diaminopimelate and acetate. This chain is N-acetyldiaminopimelate deacetylase, found in Pediococcus pentosaceus (strain ATCC 25745 / CCUG 21536 / LMG 10740 / 183-1w).